The following is an 82-amino-acid chain: ATP synthase subunit c (82 aa).

A run of 2 helical transmembrane segments spans residues 7-27 (AASV…PGIG) and 57-77 (LAFM…LLFA).

Belongs to the ATPase C chain family. In terms of assembly, F-type ATPases have 2 components, F(1) - the catalytic core - and F(0) - the membrane proton channel. F(1) has five subunits: alpha(3), beta(3), gamma(1), delta(1), epsilon(1). F(0) has four main subunits: a(1), b(1), b'(1) and c(10-14). The alpha and beta chains form an alternating ring which encloses part of the gamma chain. F(1) is attached to F(0) by a central stalk formed by the gamma and epsilon chains, while a peripheral stalk is formed by the delta, b and b' chains.

The protein localises to the cellular thylakoid membrane. Its function is as follows. F(1)F(0) ATP synthase produces ATP from ADP in the presence of a proton or sodium gradient. F-type ATPases consist of two structural domains, F(1) containing the extramembraneous catalytic core and F(0) containing the membrane proton channel, linked together by a central stalk and a peripheral stalk. During catalysis, ATP synthesis in the catalytic domain of F(1) is coupled via a rotary mechanism of the central stalk subunits to proton translocation. Key component of the F(0) channel; it plays a direct role in translocation across the membrane. A homomeric c-ring of between 10-14 subunits forms the central stalk rotor element with the F(1) delta and epsilon subunits. The polypeptide is ATP synthase subunit c (Synechococcus sp. (strain RCC307)).